Reading from the N-terminus, the 673-residue chain is Hemocyanin subunit C (673 aa).

The N-terminal stretch at 1–20 (MGAWKVWTFFAIALVVAVKA) is a signal peptide. Cu cation contacts are provided by His207, His211, and His237. Asn323 is a glycosylation site (N-linked (GlcNAc...) asparagine). Positions 358, 362, and 398 each coordinate Cu cation. Cys568 and Cys616 form a disulfide bridge.

The protein belongs to the tyrosinase family. Hemocyanin subfamily. As to quaternary structure, 36-chain polymer consisting of 6 hexamers, each of which includes 4 different chains, A, B, C and D. Hemolymph.

It localises to the secreted. The protein localises to the extracellular space. In terms of biological role, hemocyanins are copper-containing oxygen carriers occurring freely dissolved in the hemolymph of many mollusks and arthropods. In Scutigera coleoptrata (House centipede), this protein is Hemocyanin subunit C (HCC).